The chain runs to 862 residues: Cytosolic carboxypeptidase 2 (862 aa).

The 271-residue stretch at 359-629 (YPYTYTDLQC…HVCDTLLDFC (271 aa)) folds into the Peptidase M14 domain. The Zn(2+) site is built by histidine 425, glutamate 428, and histidine 521. Glutamate 593 acts as the Proton donor/acceptor in catalysis. 3 disordered regions span residues 669 to 692 (SDIPLSDIESSTSGSDSSLSDGPP), 704 to 728 (NQKTVLKNPKKKRLQTRKQRNEQYQ), and 750 to 836 (STLQ…PNWS). Over residues 674–689 (SDIESSTSGSDSSLSD) the composition is skewed to low complexity. Basic residues predominate over residues 711–721 (NPKKKRLQTRK). The segment covering 813 to 825 (ASCSPKRSTNSSL) has biased composition (polar residues).

The protein belongs to the peptidase M14 family. In terms of assembly, interacts with RARRES1, KIF11 and MAPRE1. The cofactor is Zn(2+). Widely expressed. Expressed in tissues with motile cilia such as testis, lung and trachea. Also detected in brain, eye, muscle, pancreas, intestine, stomach, pituitary, spleen, adrenal and kidney. Expressed in mitral and granular cells in brain.

It localises to the cytoplasm. It is found in the cytosol. The protein localises to the cytoskeleton. Its subcellular location is the microtubule organizing center. The protein resides in the centrosome. It localises to the centriole. It is found in the cilium basal body. The catalysed reaction is (L-glutamyl)(n+1)-gamma-L-glutamyl-L-glutamyl-[protein] + H2O = (L-glutamyl)(n)-gamma-L-glutamyl-L-glutamyl-[protein] + L-glutamate. With respect to regulation, inhibited by RARRES1. Its function is as follows. Metallocarboxypeptidase that mediates deglutamylation of tubulin and non-tubulin target proteins. Catalyzes the removal of polyglutamate side chains present on the gamma-carboxyl group of glutamate residues within the C-terminal tail of tubulin protein. Specifically cleaves tubulin long-side-chains, while it is not able to remove the branching point glutamate. Also catalyzes the removal of polyglutamate residues from the carboxy-terminus of non-tubulin proteins such as MYLK. This Mus musculus (Mouse) protein is Cytosolic carboxypeptidase 2.